Here is a 396-residue protein sequence, read N- to C-terminus: Elongation factor Tu (396 aa).

The tr-type G domain maps to K10–E206. Residues G19–T26 are G1. G19–T26 provides a ligand contact to GTP. Position 26 (T26) interacts with Mg(2+). Residues G60–N64 are G2. The G3 stretch occupies residues D81–G84. Residues D81–H85 and N136–D139 contribute to the GTP site. The interval N136 to D139 is G4. The segment at S174–K176 is G5.

The protein belongs to the TRAFAC class translation factor GTPase superfamily. Classic translation factor GTPase family. EF-Tu/EF-1A subfamily. In terms of assembly, monomer.

It is found in the cytoplasm. The catalysed reaction is GTP + H2O = GDP + phosphate + H(+). Its function is as follows. GTP hydrolase that promotes the GTP-dependent binding of aminoacyl-tRNA to the A-site of ribosomes during protein biosynthesis. The polypeptide is Elongation factor Tu (Polaromonas naphthalenivorans (strain CJ2)).